A 373-amino-acid chain; its full sequence is MTAQNPNLAALSAAGVSVWLDDLSRDRLRSGNLQELIDTKSVVGVTTNPSIFQKALSEGHTYDAQIAELAARGADVDATIRTVTTDDVRSACDVLVPQWEDSDGVDGRVSIEVDPRLAHETEKTIQQAIELWKIVDRPNLFIKIPATKAGLPAISAVLAEGISVNVTLIFSVQRYREVMDAYLTGMEKARQAGHSLSKIHSVASFFVSRVDTEIDKRLDRIGSRQALELRGQAGVANARLAYAAYREVFEDSDRYRSLKVDGARVQRPLWASTGVKNPDYSDTLYVTELVAPHTVNTMPEKTIDAVADHGVIQGDTVTGTASDAQAVFDQLGAIGIDLTDVFAVLEEEGVRKFEASWNELLQETRAHLDTAAQ.

Residue lysine 143 is the Schiff-base intermediate with substrate of the active site.

It belongs to the transaldolase family. Type 2 subfamily.

The protein resides in the cytoplasm. It catalyses the reaction D-sedoheptulose 7-phosphate + D-glyceraldehyde 3-phosphate = D-erythrose 4-phosphate + beta-D-fructose 6-phosphate. It functions in the pathway carbohydrate degradation; pentose phosphate pathway; D-glyceraldehyde 3-phosphate and beta-D-fructose 6-phosphate from D-ribose 5-phosphate and D-xylulose 5-phosphate (non-oxidative stage): step 2/3. Functionally, transaldolase is important for the balance of metabolites in the pentose-phosphate pathway. This Mycobacterium bovis (strain ATCC BAA-935 / AF2122/97) protein is Transaldolase (tal).